A 256-amino-acid chain; its full sequence is Pro-thyrotropin-releasing hormone (256 aa).

A signal peptide spans 1-24 (MQGPWLMMALALIFVLTGIPKSCA). Disordered regions lie at residues 76–128 (RQHP…EGDS) and 151–215 (VKRQ…HPCG). Pro79, Pro111, Pro156, and Pro174 each carry proline amide. Positions 104–113 (RPHKRQHPGR) are enriched in basic residues. A compositionally biased stretch (basic and acidic residues) spans 177–188 (RFIDPELQRSWE). Position 205 is a proline amide (Pro205).

The protein belongs to the TRH family. As to expression, specifically expressed in hypothalamus and testis.

Its subcellular location is the secreted. In terms of biological role, functions as a regulator of the biosynthesis of TSH in the anterior pituitary gland and as a neurotransmitter/ neuromodulator in the central and peripheral nervous systems. This chain is Pro-thyrotropin-releasing hormone (Trh), found in Mus musculus (Mouse).